A 490-amino-acid polypeptide reads, in one-letter code: 5-hydroxytryptamine receptor 3A (490 aa).

Positions 1-19 are cleaved as a signal peptide; the sequence is MVLWLQLALLALLLPTSLA. Over 20 to 249 the chain is Extracellular; that stretch reads QGEVRGKGTA…FYVVIRRRPL (230 aa). N-linked (GlcNAc...) asparagine glycans are attached at residues asparagine 33, asparagine 109, asparagine 175, and asparagine 191. A disulfide bridge links cysteine 162 with cysteine 176. A helical transmembrane segment spans residues 250–270; it reads FYAVTLLLPSIFLMIVDIVGF. Over 271 to 285 the chain is Cytoplasmic; the sequence is YLPPDSGERVSFKIT. The helical transmembrane segment at 286 to 306 threads the bilayer; the sequence is LLLGYSVFLIIVSDTLPATAI. Residues 307–312 are Extracellular-facing; sequence GTPLIS. A helical transmembrane segment spans residues 313-333; it reads VYFVVCMALLVISLAETILIV. The Cytoplasmic segment spans residues 334-467; the sequence is RLVHKQDLQQ…GSVLDKLLFR (134 aa). Residues 401 to 422 form a disordered region; the sequence is GGPQDLEKTSRGRGSPPPPPRE. The tract at residues 426 to 462 is HA-stretch; determines single-channel conductance in 5-HT3 receptors; the sequence is AMCGLLQELASIRHFLEKREETREVARDWLRVGSVLD. Residues 468 to 488 traverse the membrane as a helical segment; that stretch reads VYLLAVLAYSITLVTLWSVWH. At 489-490 the chain is on the extracellular side; sequence YA.

The protein belongs to the ligand-gated ion channel (TC 1.A.9) family. 5-hydroxytryptamine receptor (TC 1.A.9.2) subfamily. HTR3A sub-subfamily. As to quaternary structure, forms homopentameric as well as heteropentameric serotonin-activated cation-selective channel complexes with HTR3B or HTR3C or HTR3D or HTR3E. The homomeric complex is functional but exhibits low conductance with modified voltage dependence, and decreased agonist and antagonist affinity. Heteropentameric complexes display properties which resemble that of neuronal serotonin-activated channels in vivo. Interacts with RIC3. In terms of tissue distribution, expressed in cortex, intestine and liver. Not expressed in muscle or spleen.

The protein resides in the postsynaptic cell membrane. The protein localises to the cell membrane. The enzyme catalyses Na(+)(in) = Na(+)(out). The catalysed reaction is K(+)(in) = K(+)(out). It carries out the reaction Ca(2+)(in) = Ca(2+)(out). It catalyses the reaction Mg(2+)(in) = Mg(2+)(out). Forms serotonin (5-hydroxytryptamine/5-HT3)-activated cation-selective channel complexes, which when activated cause fast, depolarizing responses in neurons. The protein is 5-hydroxytryptamine receptor 3A of Cavia porcellus (Guinea pig).